Here is a 243-residue protein sequence, read N- to C-terminus: Probable transcriptional regulatory protein BRE_29 (243 aa).

This sequence belongs to the TACO1 family.

It is found in the cytoplasm. This Borrelia recurrentis (strain A1) protein is Probable transcriptional regulatory protein BRE_29.